A 113-amino-acid polypeptide reads, in one-letter code: Hydrogenase maturation factor HybF (113 aa).

The Ni(2+) site is built by H2 and E3. Positions 73, 76, 89, and 92 each coordinate Zn(2+).

Belongs to the HypA/HybF family. HybF subfamily. In terms of assembly, monomer.

In terms of biological role, involved in the maturation of [NiFe] hydrogenases. Required for nickel insertion into the metal center of the hydrogenase. HybF is involved in maturation of hydrogenases 1 and 2. It may partially substitute for the function of HypA and vice versa. This is Hydrogenase maturation factor HybF from Escherichia coli (strain K12).